A 241-amino-acid chain; its full sequence is uncharacterized protein (241 aa).

The HTH luxR-type domain occupies 147–212; the sequence is FSYRSVILTL…EMYAWINSAQ (66 aa).

This is an uncharacterized protein from Escherichia coli O157:H7.